A 362-amino-acid polypeptide reads, in one-letter code: UPF0324 membrane protein YPO1307/y2878/YP_1285 (362 aa).

The next 9 helical transmembrane spans lie at Y21 to V38, G48 to L70, V102 to A124, V139 to L161, V168 to Y190, M240 to L257, W278 to V300, T305 to I327, and P334 to V356.

This sequence belongs to the UPF0324 family.

It localises to the cell membrane. In Yersinia pestis, this protein is UPF0324 membrane protein YPO1307/y2878/YP_1285.